The sequence spans 458 residues: Glutamyl-tRNA(Gln) amidotransferase subunit D (458 aa).

In terms of domain architecture, Asparaginase/glutaminase spans Pro97–Asn434. Active-site residues include Thr107, Thr185, Asp186, and Lys264.

Belongs to the asparaginase 1 family. GatD subfamily. Heterodimer of GatD and GatE.

The catalysed reaction is L-glutamyl-tRNA(Gln) + L-glutamine + ATP + H2O = L-glutaminyl-tRNA(Gln) + L-glutamate + ADP + phosphate + H(+). Functionally, allows the formation of correctly charged Gln-tRNA(Gln) through the transamidation of misacylated Glu-tRNA(Gln) in organisms which lack glutaminyl-tRNA synthetase. The reaction takes place in the presence of glutamine and ATP through an activated gamma-phospho-Glu-tRNA(Gln). The GatDE system is specific for glutamate and does not act on aspartate. In Methanopyrus kandleri (strain AV19 / DSM 6324 / JCM 9639 / NBRC 100938), this protein is Glutamyl-tRNA(Gln) amidotransferase subunit D.